We begin with the raw amino-acid sequence, 337 residues long: Glyceraldehyde-3-phosphate dehydrogenase 2 (337 aa).

NAD(+) contacts are provided by residues 11–12, Asp35, Arg79, and Thr121; that span reads RI. D-glyceraldehyde 3-phosphate is bound by residues 153 to 155, Thr184, Arg199, 212 to 213, and Arg235; these read SCT and TG. The active-site Nucleophile is the Cys154. Position 317 (Asn317) interacts with NAD(+).

The protein belongs to the glyceraldehyde-3-phosphate dehydrogenase family. As to quaternary structure, homotetramer.

It is found in the cytoplasm. The catalysed reaction is D-glyceraldehyde 3-phosphate + phosphate + NADP(+) = (2R)-3-phospho-glyceroyl phosphate + NADPH + H(+). It catalyses the reaction D-glyceraldehyde 3-phosphate + phosphate + NAD(+) = (2R)-3-phospho-glyceroyl phosphate + NADH + H(+). It functions in the pathway carbohydrate degradation; glycolysis; pyruvate from D-glyceraldehyde 3-phosphate: step 1/5. Involved in photosynthetic carbon assimilation. Catalyzes the NAD(P)-dependent oxidative phosphorylation of glyceraldehyde 3-phosphate (G3P) to 1,3-bisphosphoglycerate (BPG). The first reaction step involves the formation of a hemiacetal intermediate between G3P and a cysteine residue, and this hemiacetal intermediate is then oxidized to a thioester, with concomitant reduction of NAD to NADH. The reduced NADH is then exchanged with the second NAD, and the thioester is attacked by a nucleophilic inorganic phosphate to produce BPG. It can use both NADP and NAD. The protein is Glyceraldehyde-3-phosphate dehydrogenase 2 (gap2) of Synechocystis sp. (strain ATCC 27184 / PCC 6803 / Kazusa).